Consider the following 191-residue polypeptide: ATP-dependent Clp protease proteolytic subunit 1 (191 aa).

Serine 91 acts as the Nucleophile in catalysis. Residue histidine 116 is part of the active site.

It belongs to the peptidase S14 family. Fourteen ClpP subunits assemble into 2 heptameric rings which stack back to back to give a disk-like structure with a central cavity, resembling the structure of eukaryotic proteasomes.

It is found in the cytoplasm. It carries out the reaction Hydrolysis of proteins to small peptides in the presence of ATP and magnesium. alpha-casein is the usual test substrate. In the absence of ATP, only oligopeptides shorter than five residues are hydrolyzed (such as succinyl-Leu-Tyr-|-NHMec, and Leu-Tyr-Leu-|-Tyr-Trp, in which cleavage of the -Tyr-|-Leu- and -Tyr-|-Trp bonds also occurs).. Its function is as follows. Cleaves peptides in various proteins in a process that requires ATP hydrolysis. Has a chymotrypsin-like activity. Plays a major role in the degradation of misfolded proteins. The polypeptide is ATP-dependent Clp protease proteolytic subunit 1 (Chlamydia caviae (strain ATCC VR-813 / DSM 19441 / 03DC25 / GPIC) (Chlamydophila caviae)).